A 345-amino-acid chain; its full sequence is Ketol-acid reductoisomerase (NADP(+)) (345 aa).

A KARI N-terminal Rossmann domain is found at 2–182 (AKVYHDSSAD…GTTRAGVLET (181 aa)). NADP(+) is bound by residues 25 to 28 (YGSQ), arginine 48, serine 51, serine 53, and 83 to 86 (DTEQ). The active site involves histidine 108. An NADP(+)-binding site is contributed by glycine 134. The KARI C-terminal knotted domain occupies 183–328 (TFKEETETDL…AQLRDMMTFL (146 aa)). Residues aspartate 191, glutamate 195, glutamate 227, and glutamate 231 each coordinate Mg(2+). Serine 252 is a substrate binding site.

The protein belongs to the ketol-acid reductoisomerase family. Mg(2+) serves as cofactor.

It catalyses the reaction (2R)-2,3-dihydroxy-3-methylbutanoate + NADP(+) = (2S)-2-acetolactate + NADPH + H(+). The catalysed reaction is (2R,3R)-2,3-dihydroxy-3-methylpentanoate + NADP(+) = (S)-2-ethyl-2-hydroxy-3-oxobutanoate + NADPH + H(+). Its pathway is amino-acid biosynthesis; L-isoleucine biosynthesis; L-isoleucine from 2-oxobutanoate: step 2/4. It participates in amino-acid biosynthesis; L-valine biosynthesis; L-valine from pyruvate: step 2/4. Its function is as follows. Involved in the biosynthesis of branched-chain amino acids (BCAA). Catalyzes an alkyl-migration followed by a ketol-acid reduction of (S)-2-acetolactate (S2AL) to yield (R)-2,3-dihydroxy-isovalerate. In the isomerase reaction, S2AL is rearranged via a Mg-dependent methyl migration to produce 3-hydroxy-3-methyl-2-ketobutyrate (HMKB). In the reductase reaction, this 2-ketoacid undergoes a metal-dependent reduction by NADPH to yield (R)-2,3-dihydroxy-isovalerate. This Koribacter versatilis (strain Ellin345) protein is Ketol-acid reductoisomerase (NADP(+)).